A 512-amino-acid polypeptide reads, in one-letter code: Ribose import ATP-binding protein RbsA 1 (512 aa).

2 consecutive ABC transporter domains span residues 8–244 (FRME…IGRE) and 254–502 (AHRG…LNIA). 40–47 (GENGAGKS) lines the ATP pocket.

The protein belongs to the ABC transporter superfamily. Ribose importer (TC 3.A.1.2.1) family. As to quaternary structure, the complex is composed of an ATP-binding protein (RbsA), two transmembrane proteins (RbsC) and a solute-binding protein (RbsB).

Its subcellular location is the cell inner membrane. It catalyses the reaction D-ribose(out) + ATP + H2O = D-ribose(in) + ADP + phosphate + H(+). Its function is as follows. Part of the ABC transporter complex RbsABC involved in ribose import. Responsible for energy coupling to the transport system. This is Ribose import ATP-binding protein RbsA 1 from Rhizobium johnstonii (strain DSM 114642 / LMG 32736 / 3841) (Rhizobium leguminosarum bv. viciae).